The chain runs to 1483 residues: Tyrosine-protein kinase BAZ1B (1483 aa).

A WAC domain is found at 20–126 (EPLFTIPHTQ…GEECDFEVGK (107 aa)). Residues 145-212 (EEATEKKSDG…TSLKKGERKW (68 aa)) are disordered. 2 stretches are compositionally biased toward basic and acidic residues: residues 148–165 (TEKKSDGACDSPSSDKEN) and 172–195 (DHQKKETVVKEDEGRRESINDRAR). A phosphoserine mark is found at serine 152, serine 158, and serine 161. A C motif motif is present at residues 207–213 (KGERKWA). A Phosphothreonine modification is found at threonine 266. A disordered region spans residues 302–333 (NPSTKRKNTGSPDRKPSKKSKTDNSSLSSPLN). Serine 330, serine 345, serine 347, serine 349, serine 361, and serine 374 each carry phosphoserine. Disordered stretches follow at residues 379-432 (HTNF…KTPK) and 446-470 (GTQKMTRAPRNSGGTPRTSSKPHKH). Composition is skewed to basic residues over residues 384–395 (IPKKGPPAKKPG) and 423–432 (SPKKGLKTPK). Positions 533–586 (KRWASMSEEQRKEYLKKKREELKKKLKEKAKERREKEMLERLEKQKRYEDQELT) form a coiled coil. In terms of domain architecture, DDT spans 604-668 (NTLFGDVAMV…LQTLLQDEIA (65 aa)). A phosphoserine mark is found at serine 699, serine 705, serine 708, and serine 716. Positions 768-814 (TRQQMSAELWKERLAVLKEENDKKRAEKQKRKEMEAKNKENGKVENG) form a coiled coil. Residues 788 to 810 (NDKKRAEKQKRKEMEAKNKENGK) are compositionally biased toward basic and acidic residues. Residues 788–817 (NDKKRAEKQKRKEMEAKNKENGKVENGLGK) are disordered. Lysine 826 participates in a covalent cross-link: Glycyl lysine isopeptide (Lys-Gly) (interchain with G-Cter in SUMO1); alternate. Residue lysine 826 forms a Glycyl lysine isopeptide (Lys-Gly) (interchain with G-Cter in SUMO2); alternate linkage. The stretch at 850 to 893 (IQAKKEREIQEREMKVKLERQAEEERIRKHKAAAEKAFQEGIAK) forms a coiled coil. Residue lysine 853 forms a Glycyl lysine isopeptide (Lys-Gly) (interchain with G-Cter in SUMO2) linkage. Serine 947 carries the post-translational modification Phosphoserine. Residues lysine 1043, lysine 1089, and lysine 1107 each participate in a glycyl lysine isopeptide (Lys-Gly) (interchain with G-Cter in SUMO2) cross-link. The segment at 1184–1234 (NARCKVCRKKGEDDKLILCDECNKAFHLFCLRPALYEVPDGEWQCPACQPA) adopts a PHD-type zinc-finger fold. The tract at residues 1237 to 1326 (RRNSRGRNYT…PKAPPVDDAE (90 aa)) is disordered. Residues 1245–1283 (YTEESASEDSEDDESDEEEEEEEEEEEEEDYEVAGLRLR) adopt a coiled-coil conformation. A compositionally biased stretch (acidic residues) spans 1249–1276 (SASEDSEDDESDEEEEEEEEEEEEEDYE). 2 stretches are compositionally biased toward basic residues: residues 1282 to 1292 (LRPRKTIRGKH) and 1301 to 1316 (SGRRPGKKPHSTRRSQ). Residue serine 1315 is modified to Phosphoserine. Lysine 1335 carries the post-translational modification N6-acetyllysine. Residues 1339–1443 (RRQSLELQKC…QCLVALLHKH (105 aa)) form the Bromo domain. Residues serine 1342 and serine 1468 each carry the phosphoserine modification. The segment at 1455 to 1483 (KKFPDRLAEDEGDSEPEAVGQSRGRRQKK) is disordered.

This sequence belongs to the WAL family. BAZ1B subfamily. In terms of assembly, component of the WICH-1 ISWI chromatin remodeling complex, at least composed of SMARCA1 and BAZ1B/WSTF, which regulates the spacing of histone octamers on the DNA template to facilitate access to DNA. Within the WICH-1 ISWI chromatin remodeling complex interacts with SMARCA1; the interaction is direct. Component of the WICH-5 ISWI chromatin remodeling complex (also called the WICH complex), at least composed of SMARCA5/SNF2H and BAZ1B/WSTF, which regulates the spacing of histone octamers on the DNA template to facilitate access to DNA. Within the WICH-5 ISWI chromatin remodeling complex interacts with SMARCA5/SNF2H; the interaction is direct. Component of the B-WICH chromatin remodeling complex, at least composed of SMARCA5/SNF2H, BAZ1B/WSTF, SF3B1, DEK, MYO1C, ERCC6, MYBBP1A and DDX21. Within the B-WICH chromatin remodeling complex, interacts with SMARCA5/SNF2H, DDX21, DEK, MYBBP1A, SF3B1, ERCC6 and MYO1C. Interacts with PCNA; the interaction is direct and is required for BAZ1B/WSTF binding to replication foci during S phase. Interacts with CDT1. It depends on Mn(2+) as a cofactor. As to expression, ubiquitously expressed with high levels of expression in heart, brain, placenta, skeletal muscle and ovary.

The protein localises to the nucleus. The enzyme catalyses L-tyrosyl-[protein] + ATP = O-phospho-L-tyrosyl-[protein] + ADP + H(+). Atypical tyrosine-protein kinase that plays a central role in chromatin remodeling and acts as a transcription regulator. Involved in DNA damage response by phosphorylating 'Tyr-142' of histone H2AX (H2AXY142ph). H2AXY142ph plays a central role in DNA repair and acts as a mark that distinguishes between apoptotic and repair responses to genotoxic stress. Regulatory subunit of the ATP-dependent WICH-1 and WICH-5 ISWI chromatin remodeling complexes, which form ordered nucleosome arrays on chromatin and facilitate access to DNA during DNA-templated processes such as DNA replication, transcription, and repair. Both complexes regulate the spacing of nucleosomes along the chromatin and have the ability to slide mononucleosomes to the center of a DNA template. The WICH-1 ISWI chromatin remodeling complex has a lower ATP hydrolysis rate than the WICH-5 ISWI chromatin remodeling complex. The WICH-5 ISWI chromatin-remodeling complex regulates the transcription of various genes, has a role in RNA polymerase I transcription. Within the B-WICH complex has a role in RNA polymerase III transcription. Mediates the recruitment of the WICH-5 ISWI chromatin remodeling complex to replication foci during DNA replication. In Homo sapiens (Human), this protein is Tyrosine-protein kinase BAZ1B (BAZ1B).